The following is a 315-amino-acid chain: Melanocyte-stimulating hormone receptor (315 aa).

Residues 1 to 35 lie on the Extracellular side of the membrane; the sequence is MSTQEPQKSLLGSLNSNATSHLGLATNQSEPWCLY. N-linked (GlcNAc...) asparagine glycosylation is found at N17 and N27. A helical membrane pass occupies residues 36–61; it reads VSIPDGLFLSLGLVSLVENVLVVIAI. Topologically, residues 62 to 70 are cytoplasmic; the sequence is TKNRNLHSP. Residues 71–91 traverse the membrane as a helical segment; the sequence is MYYFICCLALSDLMVSVSIVL. The Extracellular segment spans residues 92–116; it reads ETTIILLLEAGILVARVALVQQLDN. Residues 117–138 traverse the membrane as a helical segment; sequence LIDVLICGSMVSSLCFLGIIAI. Residues 139–161 are Cytoplasmic-facing; sequence DRYISIFYALRYHSIVTLPRARR. A helical transmembrane segment spans residues 162 to 181; the sequence is AVVGIWMVSIVSSTLFITYY. Topologically, residues 182–189 are extracellular; sequence KHTAVLLC. The helical transmembrane segment at 190–209 threads the bilayer; sequence LVTFFLAMLALMAILYAHMF. Residues 210–238 are Cytoplasmic-facing; it reads TRACQHAQGIAQLHKRRRSIRQGFCLKGA. Residues 239–264 form a helical membrane-spanning segment; that stretch reads ATLTILLGIFFLCWGPFFLHLLLIVL. Topologically, residues 265–277 are extracellular; it reads CPQHPTCSCIFKN. The chain crosses the membrane as a helical span at residues 278-298; the sequence is FNLFLLLIVLSSTVDPLIYAF. Residues 299-315 are Cytoplasmic-facing; the sequence is RSQELRMTLKEVLLCSW. Residue C313 is the site of S-palmitoyl cysteine attachment.

It belongs to the G-protein coupled receptor 1 family. In terms of assembly, interacts with MGRN1, but does not undergo MGRN1-mediated ubiquitination; this interaction competes with GNAS-binding and thus inhibits agonist-induced cAMP production. Interacts with OPN3; the interaction results in a decrease in MC1R-mediated cAMP signaling and ultimately a decrease in melanin production in melanocytes.

Its subcellular location is the cell membrane. Its function is as follows. Receptor for MSH (alpha, beta and gamma) and ACTH. The activity of this receptor is mediated by G proteins which activate adenylate cyclase. Mediates melanogenesis, the production of eumelanin (black/brown) and phaeomelanin (red/yellow), via regulation of cAMP signaling in melanocytes. The sequence is that of Melanocyte-stimulating hormone receptor (Mc1r) from Mus musculus (Mouse).